Consider the following 275-residue polypeptide: MSNSRQHQGHFARKRFGQNFLVDHGVIDAIVAAIRPERGERMVEIGPGLGALTGPVIARLATPGSPLHAVELDRDLIGRLEQRFGELLELHAGDALTFDFGSIARPGDEPSLRIIGNLPYNISSPLLFHLMSFAPVVIDQHFMLQNEVVERMVAEPGTKAFSRLSVMLQYRYVMDKLIDVPPESFQPPPKVDSAIVRMIPHAPHELPAVDPAVLGEVVTAAFSQRRKMLRNTLGGYRDLVDFDALGFDLARRAEDIGVDEYVRVAQAVASARASG.

S-adenosyl-L-methionine contacts are provided by Asn-19, Leu-21, Gly-46, Glu-71, Asp-94, and Asn-117.

It belongs to the class I-like SAM-binding methyltransferase superfamily. rRNA adenine N(6)-methyltransferase family. RsmA subfamily.

It is found in the cytoplasm. It carries out the reaction adenosine(1518)/adenosine(1519) in 16S rRNA + 4 S-adenosyl-L-methionine = N(6)-dimethyladenosine(1518)/N(6)-dimethyladenosine(1519) in 16S rRNA + 4 S-adenosyl-L-homocysteine + 4 H(+). In terms of biological role, specifically dimethylates two adjacent adenosines (A1518 and A1519) in the loop of a conserved hairpin near the 3'-end of 16S rRNA in the 30S particle. May play a critical role in biogenesis of 30S subunits. This is Ribosomal RNA small subunit methyltransferase A from Burkholderia mallei (strain NCTC 10247).